The chain runs to 1647 residues: Probable ubiquitin fusion degradation protein C12B10.01c (1647 aa).

Residues 192–209 show a composition bias toward polar residues; it reads TYSDSSNYHTSTDSSQYN. Disordered regions lie at residues 192-288 and 1039-1076; these read TYSD…PSAA and ESMS…SSTS. 2 stretches are compositionally biased toward acidic residues: residues 218–228 and 245–273; these read DTNDGTDDDIN and ERDE…ENEN. Low complexity predominate over residues 1039–1050; it reads ESMSGSSRNSSG. Positions 1051–1065 are enriched in polar residues; it reads DYTDSMSQDAPNHTT. Over residues 1066–1076 the composition is skewed to basic and acidic residues; sequence EPSERRDSSTS. The interval 1183–1257 is K-box; the sequence is IENILTDFSN…SVSFLLSRNP (75 aa). The HECT domain maps to 1294 to 1647; it reads ATYAASENIL…LEGQGSFHLS (354 aa). The Glycyl thioester intermediate role is filled by Cys1614.

Belongs to the UPL family. K-HECT subfamily.

It carries out the reaction S-ubiquitinyl-[E2 ubiquitin-conjugating enzyme]-L-cysteine + [acceptor protein]-L-lysine = [E2 ubiquitin-conjugating enzyme]-L-cysteine + N(6)-ubiquitinyl-[acceptor protein]-L-lysine.. Functionally, E3 ubiquitin-protein ligase which accepts ubiquitin from an E2 ubiquitin-conjugating enzyme in the form of a thioester and then directly transfers the ubiquitin to targeted substrates. The chain is Probable ubiquitin fusion degradation protein C12B10.01c from Schizosaccharomyces pombe (strain 972 / ATCC 24843) (Fission yeast).